We begin with the raw amino-acid sequence, 206 residues long: Thymidylate kinase (206 aa).

14–21 serves as a coordination point for ATP; it reads GGEGIGKS.

This sequence belongs to the thymidylate kinase family.

The catalysed reaction is dTMP + ATP = dTDP + ADP. Phosphorylation of dTMP to form dTDP in both de novo and salvage pathways of dTTP synthesis. This is Thymidylate kinase from Rickettsia bellii (strain RML369-C).